We begin with the raw amino-acid sequence, 235 residues long: Urease accessory protein UreF (235 aa).

It belongs to the UreF family. As to quaternary structure, ureD, UreF and UreG form a complex that acts as a GTP-hydrolysis-dependent molecular chaperone, activating the urease apoprotein by helping to assemble the nickel containing metallocenter of UreC. The UreE protein probably delivers the nickel.

The protein resides in the cytoplasm. Its function is as follows. Required for maturation of urease via the functional incorporation of the urease nickel metallocenter. The chain is Urease accessory protein UreF from Psychrobacter cryohalolentis (strain ATCC BAA-1226 / DSM 17306 / VKM B-2378 / K5).